Consider the following 218-residue polypeptide: Protein-methionine-sulfoxide reductase heme-binding subunit MsrQ (218 aa).

A run of 5 helical transmembrane segments spans residues Ala14–Trp34, Leu60–Ile80, Leu86–Leu106, Pro121–Thr141, and Leu155–Lys175.

The protein belongs to the MsrQ family. In terms of assembly, heterodimer of a catalytic subunit (MsrP) and a heme-binding subunit (MsrQ). FMN is required as a cofactor. Heme b serves as cofactor.

It is found in the cell inner membrane. In terms of biological role, part of the MsrPQ system that repairs oxidized periplasmic proteins containing methionine sulfoxide residues (Met-O), using respiratory chain electrons. Thus protects these proteins from oxidative-stress damage caused by reactive species of oxygen and chlorine generated by the host defense mechanisms. MsrPQ is essential for the maintenance of envelope integrity under bleach stress, rescuing a wide series of structurally unrelated periplasmic proteins from methionine oxidation. MsrQ provides electrons for reduction to the reductase catalytic subunit MsrP, using the quinone pool of the respiratory chain. The protein is Protein-methionine-sulfoxide reductase heme-binding subunit MsrQ of Xanthomonas campestris pv. campestris (strain 8004).